A 704-amino-acid chain; its full sequence is Polyribonucleotide nucleotidyltransferase (704 aa).

Residues Asp-488 and Asp-494 each coordinate Mg(2+). One can recognise a KH domain in the interval 555–614 (PRITTIKINPEKIRDVIGKGGATIRALTEETGTTIELDDDGTVKIASSNGEATKEAIRRI). The S1 motif domain occupies 624-692 (GTVYNGKVVR…RQGRVRLSMK (69 aa)).

This sequence belongs to the polyribonucleotide nucleotidyltransferase family. In terms of assembly, component of the RNA degradosome, which is a multiprotein complex involved in RNA processing and mRNA degradation. Mg(2+) serves as cofactor.

It localises to the cytoplasm. It catalyses the reaction RNA(n+1) + phosphate = RNA(n) + a ribonucleoside 5'-diphosphate. Functionally, involved in mRNA degradation. Catalyzes the phosphorolysis of single-stranded polyribonucleotides processively in the 3'- to 5'-direction. In Shewanella halifaxensis (strain HAW-EB4), this protein is Polyribonucleotide nucleotidyltransferase.